Here is a 470-residue protein sequence, read N- to C-terminus: Probable E3 ubiquitin-protein ligase TRIML1 (470 aa).

The segment at 22 to 63 (CFICLDYFSSPVTTECGHSFCLMCLLKSWEEHNTPLSCPECW) adopts an RING-type zinc-finger fold. Coiled coils occupy residues 135 to 170 (SEAE…KERV) and 196 to 235 (KEEE…GKMI). The region spanning 273–470 (TELSLCHITG…NTDPLIICHI (198 aa)) is the B30.2/SPRY domain.

Interacts with USP5. In terms of tissue distribution, testis.

It catalyses the reaction S-ubiquitinyl-[E2 ubiquitin-conjugating enzyme]-L-cysteine + [acceptor protein]-L-lysine = [E2 ubiquitin-conjugating enzyme]-L-cysteine + N(6)-ubiquitinyl-[acceptor protein]-L-lysine.. It participates in protein modification; protein ubiquitination. In terms of biological role, probable E3 ubiquitin-protein ligase which plays an important role in blastocyst development. Involved in progression of blastocyst stage and subsequent embryo development. This chain is Probable E3 ubiquitin-protein ligase TRIML1 (Triml1), found in Mus musculus (Mouse).